Here is a 74-residue protein sequence, read N- to C-terminus: Kappa-scoloptoxin(07)-Ssm2c (74 aa).

An N-terminal signal peptide occupies residues 1-19; the sequence is MLVFYAPLFVSIFSNTVMG. The propeptide occupies 20–41; the sequence is ATIDKPIPKPILREAIEKIAVN.

This sequence belongs to the scoloptoxin-07 family. In terms of processing, contains 3 disulfide bonds. As to expression, expressed by the venom gland.

It localises to the secreted. In terms of biological role, inhibits voltage-gated potassium channels. The sequence is that of Kappa-scoloptoxin(07)-Ssm2c from Scolopendra mutilans (Chinese red-headed centipede).